Reading from the N-terminus, the 245-residue chain is Transmembrane protein 116 (245 aa).

4 consecutive transmembrane segments (helical) span residues Met24 to Gly44, Gly88 to Ile108, Phe141 to Leu161, and Leu173 to Thr195.

The protein localises to the membrane. This is Transmembrane protein 116 (TMEM116) from Homo sapiens (Human).